The following is a 562-amino-acid chain: NAD-dependent malic enzyme (562 aa).

The active-site Proton donor is Tyr-101. Arg-154 is a binding site for NAD(+). Residue Lys-172 is the Proton acceptor of the active site. Residues Glu-243, Asp-244, and Asp-267 each coordinate a divalent metal cation. NAD(+) is bound by residues Asp-267 and Asn-415.

The protein belongs to the malic enzymes family. Homotetramer. The cofactor is Mg(2+). Requires Mn(2+) as cofactor.

The catalysed reaction is (S)-malate + NAD(+) = pyruvate + CO2 + NADH. It catalyses the reaction oxaloacetate + H(+) = pyruvate + CO2. This chain is NAD-dependent malic enzyme, found in Shewanella baltica (strain OS223).